The primary structure comprises 220 residues: Large ribosomal subunit protein uL3 (220 aa).

The disordered stretch occupies residues 137–159; that stretch reads GASHGAHKNHRKPGSIGGASTPS.

This sequence belongs to the universal ribosomal protein uL3 family. In terms of assembly, part of the 50S ribosomal subunit. Forms a cluster with proteins L14 and L19.

In terms of biological role, one of the primary rRNA binding proteins, it binds directly near the 3'-end of the 23S rRNA, where it nucleates assembly of the 50S subunit. The protein is Large ribosomal subunit protein uL3 of Renibacterium salmoninarum (strain ATCC 33209 / DSM 20767 / JCM 11484 / NBRC 15589 / NCIMB 2235).